A 712-amino-acid chain; its full sequence is TGF-beta-activated kinase 1 and MAP3K7-binding protein 3 (712 aa).

A2 bears the N-acetylalanine mark. One can recognise a CUE domain in the interval 8–51; that stretch reads LDIQVLHDLRQRFPEIPEGVVSQCMLQNNNNLEACCRALSQESS. Phosphoserine is present on residues S60, S101, and S103. Disordered regions lie at residues 141–189, 227–345, 369–447, and 475–509; these read FMNE…HIPR, PGSI…KQGS, TVEP…SPRV, and ERSA…SSGS. The segment covering 163–173 has biased composition (polar residues); sequence MQTGMNPSAMQ. Composition is skewed to low complexity over residues 233-249 and 269-290; these read RQTS…QSTP and YPHQ…IPQS. Pro residues predominate over residues 322 to 332; that stretch reads PPSPSTTPPHP. Polar residues-rich tracts occupy residues 336–345 and 371–404; these read GPPSYQKQGS and EPSQ…TATT. Phosphoserine is present on S385. Phosphothreonine is present on T404. Over residues 405–417 the composition is skewed to low complexity; that stretch reads PPSSSPSRGISSQ. Residues S409 and S492 each carry the phosphoserine modification. At S506 the chain carries Phosphoserine; by MAPKAPK2 and MAPKAPK3. The stretch at 517–559 forms a coiled coil; sequence ALLLHQRARMERLAKQLKLEKEELERLKSEVNGMEHDLMQRRL. Residues 609-636 form a disordered region; sequence MNNFYDNIEPGPVVPPKPSKKDSSDPCT. Basic and acidic residues predominate over residues 627–636; it reads SKKDSSDPCT. K649 participates in a covalent cross-link: Glycyl lysine isopeptide (Lys-Gly) (interchain with G-Cter in ubiquitin). The span at 658–667 shows a compositional bias: basic and acidic residues; the sequence is QAAAADEHRT. The interval 658–682 is disordered; it reads QAAAADEHRTGSTQSPRTQPRDEDY. The RanBP2-type zinc-finger motif lies at 682-712; the sequence is YEGAPWNCDSCTFLNHPALNRCEQCEMPRYT. At C692 the chain carries (Microbial infection) S-methylcysteine.

In terms of assembly, interacts with TAB1, TAB2, MAP3K7, TRAF2 and TRAF6. The minimal TAB3-containing complex (TAB1-MAP3K7-TAB3) appears not to contain TAB2. However, it seems sensible to consider that TAB2 may also join this complex and may act in a cooperative manner with TAB3. Interacts with DYNC2I2 (via the WD domains). Interacts with RBCK1. Binds 'Lys-63'-linked polyubiquitin chains. Interacts with TRIM5. Interacts with TRIM38 (via B30.2/SPRY domain), leading to its translocation to lysosomes and degradation. Interacts with ASB1. As to quaternary structure, (Microbial infection) Interacts with M.tuberculosis PtpA, which blocks the NF-kappa-B signaling pathway. Post-translationally, ubiquitinated; following IL1 stimulation or TRAF6 overexpression. Ubiquitinated by AMFR via 'Lys-27'-linked polyubiquitination; leading to TAK1/MAP3K7 activation. Degraded in a lysosome-dependent manner following interaction with TRIM38. In terms of processing, phosphorylated at Ser-506 by MAPKAPK2 and MAPKAPK3 following IL1 treatment. Post-translationally, (Microbial infection) Methylated at Cys-692 by enteropathogenic E.coli protein NleE or S.flexneri protein OspZ: methylation disrupts zinc-binding and ability to bind 'Lys-63'-linked ubiquitin, leading to NF-kappa-B inactivation. As to expression, widely expressed. Constitutively overexpressed in certain tumor tissues. Major transcript. In terms of tissue distribution, minor transcript.

In terms of biological role, adapter required to activate the JNK and NF-kappa-B signaling pathways through the specific recognition of 'Lys-63'-linked polyubiquitin chains by its RanBP2-type zinc finger (NZF). Acts as an adapter linking MAP3K7/TAK1 and TRAF6 to 'Lys-63'-linked polyubiquitin chains. The RanBP2-type zinc finger (NZF) specifically recognizes Lys-63'-linked polyubiquitin chains unanchored or anchored to the substrate proteins such as RIPK1/RIP1 and RIPK2: this acts as a scaffold to organize a large signaling complex to promote autophosphorylation of MAP3K7/TAK1, and subsequent activation of I-kappa-B-kinase (IKK) core complex by MAP3K7/TAK1. Its function is as follows. May be an oncogenic factor. This chain is TGF-beta-activated kinase 1 and MAP3K7-binding protein 3, found in Homo sapiens (Human).